Consider the following 369-residue polypeptide: Ribonuclease D (369 aa).

The 3'-5' exonuclease domain maps to 1–166; the sequence is MITTNDALAA…PIAHKLMEQV (166 aa). The 80-residue stretch at 206-285 folds into the HRDC domain; it reads RPRQLACLKL…AQAQALLEDA (80 aa).

The protein belongs to the RNase D family. Requires a divalent metal cation as cofactor.

It is found in the cytoplasm. The enzyme catalyses Exonucleolytic cleavage that removes extra residues from the 3'-terminus of tRNA to produce 5'-mononucleotides.. Functionally, exonuclease involved in the 3' processing of various precursor tRNAs. Initiates hydrolysis at the 3'-terminus of an RNA molecule and releases 5'-mononucleotides. The sequence is that of Ribonuclease D from Cronobacter turicensis (strain DSM 18703 / CCUG 55852 / LMG 23827 / z3032).